Consider the following 230-residue polypeptide: Thymidylate kinase (230 aa).

Residue 20–27 (GGEGAGKS) participates in ATP binding.

This sequence belongs to the thymidylate kinase family.

The enzyme catalyses dTMP + ATP = dTDP + ADP. Phosphorylation of dTMP to form dTDP in both de novo and salvage pathways of dTTP synthesis. This chain is Thymidylate kinase, found in Rhodopseudomonas palustris (strain TIE-1).